Consider the following 441-residue polypeptide: Serine/threonine-protein phosphatase 2A activator 1 (441 aa).

Composition is skewed to polar residues over residues 66 to 75 (NIPPSNTTHS) and 421 to 432 (QRQDDLNSTTYR). Disordered stretches follow at residues 66–100 (NIPP…SSNQ) and 421–441 (QRQD…LGRN).

It belongs to the PTPA-type PPIase family.

It is found in the cytoplasm. The protein resides in the nucleus. It carries out the reaction [protein]-peptidylproline (omega=180) = [protein]-peptidylproline (omega=0). PPIases accelerate the folding of proteins. It catalyzes the cis-trans isomerization of proline imidic peptide bonds in oligopeptides. Acts as a regulatory subunit for PP2A-like phosphatases modulating their activity or substrate specificity, probably by inducing a conformational change in the catalytic subunit, a direct target of the PPIase. Can reactivate inactive phosphatase PP2A-phosphatase methylesterase complexes (PP2Ai) in presence of ATP and Mg(2+) by dissociating the inactive form from the complex. The sequence is that of Serine/threonine-protein phosphatase 2A activator 1 (RRD1) from Debaryomyces hansenii (strain ATCC 36239 / CBS 767 / BCRC 21394 / JCM 1990 / NBRC 0083 / IGC 2968) (Yeast).